The primary structure comprises 150 residues: Small ribosomal subunit protein uS13 (150 aa).

This sequence belongs to the universal ribosomal protein uS13 family. In terms of assembly, part of the 30S ribosomal subunit. Forms a loose heterodimer with protein S19. Forms two bridges to the 50S subunit in the 70S ribosome.

Its function is as follows. Located at the top of the head of the 30S subunit, it contacts several helices of the 16S rRNA. In the 70S ribosome it contacts the 23S rRNA (bridge B1a) and protein L5 of the 50S subunit (bridge B1b), connecting the 2 subunits; these bridges are implicated in subunit movement. In Aeropyrum pernix (strain ATCC 700893 / DSM 11879 / JCM 9820 / NBRC 100138 / K1), this protein is Small ribosomal subunit protein uS13.